Consider the following 187-residue polypeptide: Lysozyme 3 (187 aa).

Residues 1–18 (MNGLFLFCVATTAALAYG) form the signal peptide. The region spanning 68-183 (TGIVSQQCLQ…WSHVHAQGCS (116 aa)) is the I-type lysozyme domain. Intrachain disulfides connect Cys-75-Cys-151, Cys-80-Cys-86, Cys-91-Cys-100, Cys-113-Cys-133, Cys-123-Cys-129, and Cys-147-Cys-165. Glu-83 functions as the Proton donor in the catalytic mechanism. Asp-94 serves as the catalytic Nucleophile. Substrate is bound at residue 106–112 (KEGYWHD). Residues Tyr-137 and 158 to 160 (HNG) each bind substrate.

As to expression, highest levels of expression detected in the digestive glands. Lower levels in the mantle, labial palps, gills and style-midgut sac, and lowest levels detected in the hemocytes. Not detected in the gonads.

The protein localises to the secreted. It catalyses the reaction Hydrolysis of (1-&gt;4)-beta-linkages between N-acetylmuramic acid and N-acetyl-D-glucosamine residues in a peptidoglycan and between N-acetyl-D-glucosamine residues in chitodextrins.. In terms of biological role, has antibacterial activity against the Gram-negative bacterium E.coli. No antibacterial activity detected against the Gram-negative bacterium V.vulnificus. The polypeptide is Lysozyme 3 (Crassostrea virginica (Eastern oyster)).